Here is a 514-residue protein sequence, read N- to C-terminus: Na(+)/H(+) antiporter NhaB (514 aa).

A run of 12 helical transmembrane segments spans residues 23 to 43 (LALL…PFIA), 52 to 72 (IFTL…LLAI), 97 to 117 (LLLM…LFIF), 120 to 140 (LLLS…AAAF), 144 to 164 (FLDA…FYGI), 202 to 222 (LMMH…VGEP), 238 to 258 (FFLR…LTCL), 303 to 323 (ALIG…VGLI), 353 to 373 (FTAL…QSLF), 391 to 411 (LFYL…VGTI), 447 to 467 (ATPN…APLI), and 475 to 495 (VWMA…CVEF).

The protein belongs to the NhaB Na(+)/H(+) (TC 2.A.34) antiporter family.

It is found in the cell inner membrane. It catalyses the reaction 2 Na(+)(in) + 3 H(+)(out) = 2 Na(+)(out) + 3 H(+)(in). Na(+)/H(+) antiporter that extrudes sodium in exchange for external protons. The polypeptide is Na(+)/H(+) antiporter NhaB (Escherichia fergusonii (strain ATCC 35469 / DSM 13698 / CCUG 18766 / IAM 14443 / JCM 21226 / LMG 7866 / NBRC 102419 / NCTC 12128 / CDC 0568-73)).